The chain runs to 301 residues: Phosducin-like protein (301 aa).

The residue at position 2 (threonine 2) is an N-acetylthreonine. The tract at residues 15-60 is disordered; sequence YYYSTSEDEDSDHEDKDRGRGAPASSSTPAEAELAGEGISVNTGPK. Residues serine 20 and serine 25 each carry the phosphoserine modification. Residues 36–49 show a composition bias toward low complexity; sequence APASSSTPAEAELA. A Phosducin domain is found at 36 to 299; the sequence is APASSSTPAE…TCHSEDSDLE (264 aa). A thioredoxin fold region spans residues 158–301; sequence FKQVLEIPSG…HSEDSDLEID (144 aa). Phosphoserine occurs at positions 226, 293, and 296.

It belongs to the phosducin family. Interacts with the CCT chaperonin complex. Forms a complex with the beta and gamma subunits of the GTP-binding protein, transducin.

Its subcellular location is the cell projection. It is found in the cilium. Functionally, functions as a co-chaperone for CCT in the assembly of heterotrimeric G protein complexes, facilitates the assembly of both Gbeta-Ggamma and RGS-Gbeta5 heterodimers. Also acts as a positive regulator of hedgehog signaling and regulates ciliary function. The polypeptide is Phosducin-like protein (Pdcl) (Rattus norvegicus (Rat)).